The following is a 215-amino-acid chain: Probable nicotinate-nucleotide adenylyltransferase (215 aa).

This sequence belongs to the NadD family.

It catalyses the reaction nicotinate beta-D-ribonucleotide + ATP + H(+) = deamido-NAD(+) + diphosphate. The protein operates within cofactor biosynthesis; NAD(+) biosynthesis; deamido-NAD(+) from nicotinate D-ribonucleotide: step 1/1. Catalyzes the reversible adenylation of nicotinate mononucleotide (NaMN) to nicotinic acid adenine dinucleotide (NaAD). The polypeptide is Probable nicotinate-nucleotide adenylyltransferase (Fervidobacterium nodosum (strain ATCC 35602 / DSM 5306 / Rt17-B1)).